Here is a 246-residue protein sequence, read N- to C-terminus: ATP synthase subunit a, chloroplastic (246 aa).

A run of 4 helical transmembrane segments spans residues 35 to 55 (GQVF…ALVG), 94 to 114 (VPYI…GALI), 133 to 153 (INVT…AGLS), and 202 to 222 (VFAL…GLFA).

It belongs to the ATPase A chain family. In terms of assembly, F-type ATPases have 2 components, CF(1) - the catalytic core - and CF(0) - the membrane proton channel. CF(1) has five subunits: alpha(3), beta(3), gamma(1), delta(1), epsilon(1). CF(0) has four main subunits: a, b, b' and c.

It is found in the plastid. The protein localises to the chloroplast thylakoid membrane. Its function is as follows. Key component of the proton channel; it plays a direct role in the translocation of protons across the membrane. The protein is ATP synthase subunit a, chloroplastic of Rhodomonas salina (Cryptomonas salina).